Consider the following 288-residue polypeptide: Probable ketoamine kinase SAOUHSC_02908 (288 aa).

86–88 (TYL) is a binding site for ATP. Asp-191 (proton acceptor) is an active-site residue.

This sequence belongs to the fructosamine kinase family.

The catalysed reaction is N(6)-(D-ribulosyl)-L-lysine + ATP = N(6)-(3-O-phospho-D-ribulosyl)-L-lysine + ADP + H(+). It catalyses the reaction N(6)-(D-erythrulosyl)-L-lysine + ATP = N(6)-(3-O-phospho-D-erythrulosyl)-L-lysine + ADP + H(+). The enzyme catalyses N(6)-D-ribulosyl-L-lysyl-[protein] + ATP = N(6)-(3-O-phospho-D-ribulosyl)-L-lysyl-[protein] + ADP + H(+). It carries out the reaction N(6)-(D-erythrulosyl)-L-lysyl-[protein] + ATP = N(6)-(3-O-phospho-D-erythrulosyl)-L-lysyl-[protein] + ADP + H(+). In terms of biological role, ketoamine kinase that phosphorylates ketoamines, such as erythruloselysine and ribuloselysine, on the third carbon of the sugar moiety to generate ketoamine 3-phosphate. Has higher activity on free lysine (erythruloselysine and ribuloselysine), than on ribuloselysine and erythruloselysine residues on glycated proteins. The protein is Probable ketoamine kinase SAOUHSC_02908 of Staphylococcus aureus (strain NCTC 8325 / PS 47).